Consider the following 157-residue polypeptide: Protein Smg (157 aa).

This sequence belongs to the Smg family.

The polypeptide is Protein Smg (Pectobacterium carotovorum subsp. carotovorum (strain PC1)).